The sequence spans 475 residues: ATP synthase subunit beta 1 (475 aa).

153–160 (GGAGVGKT) provides a ligand contact to ATP.

It belongs to the ATPase alpha/beta chains family. In terms of assembly, F-type ATPases have 2 components, CF(1) - the catalytic core - and CF(0) - the membrane proton channel. CF(1) has five subunits: alpha(3), beta(3), gamma(1), delta(1), epsilon(1). CF(0) has three main subunits: a(1), b(2) and c(9-12). The alpha and beta chains form an alternating ring which encloses part of the gamma chain. CF(1) is attached to CF(0) by a central stalk formed by the gamma and epsilon chains, while a peripheral stalk is formed by the delta and b chains.

The protein localises to the cell membrane. The enzyme catalyses ATP + H2O + 4 H(+)(in) = ADP + phosphate + 5 H(+)(out). In terms of biological role, produces ATP from ADP in the presence of a proton gradient across the membrane. The catalytic sites are hosted primarily by the beta subunits. The protein is ATP synthase subunit beta 1 of Mycoplasmopsis pulmonis (strain UAB CTIP) (Mycoplasma pulmonis).